The primary structure comprises 358 residues: Starch-binding domain-containing protein 1 (358 aa).

The Extracellular segment spans residues 1–6 (MGAVWS). Residues 7 to 23 (ALLVGGGLAGALFVWLL) traverse the membrane as a helical segment. Residues 24 to 358 (RGGPGDTGKD…KVVHAWWGIH (335 aa)) lie on the Cytoplasmic side of the membrane. Residues 30 to 42 (TGKDGDAEQEKDA) are compositionally biased toward basic and acidic residues. 2 disordered regions span residues 30–70 (TGKD…QELV) and 104–151 (SREV…SPMG). Residues 50–66 (PGGHQSGSSGLSPGPSG) are compositionally biased toward low complexity. At Ser65 the chain carries Phosphoserine. The span at 106-115 (EVCDNSREHV) shows a compositional bias: basic and acidic residues. A Phosphoserine modification is found at Ser117. The span at 126–140 (PATSETSNSRSYSEV) shows a compositional bias: polar residues. A phosphoserine mark is found at Ser148, Ser175, Ser188, and Ser194. An LIR motif is present at residues 200 to 206 (HEEWEMV). Phosphoserine occurs at positions 210, 211, and 220. Residues 258-357 (PAGSQQVSVR…DKVVHAWWGI (100 aa)) form the CBM20 domain.

In terms of assembly, interacts with the ATG8 family proteins GABARAP and GABARAPL1. Interacts with several glycogen-associated proteins, such as GYS2 (liver glycogen synthase), GDE (glycogen debranching enzyme), GBE1 (glycogen branching enzyme 1) and EPM2A (Laforin). Post-translationally, ubiquitinated, which leads to proteasomal degradation. In terms of tissue distribution, expressed at high level in skeletal and cardiac muscles. Moderately expressed in liver and placenta. No expression is found in pancreas, kidney or lung. Present in skeletal muscle, heart and placenta (at protein level).

Its subcellular location is the preautophagosomal structure membrane. It is found in the endoplasmic reticulum membrane. The protein resides in the cell membrane. It localises to the sarcolemma. The protein localises to the T-tubule. In terms of biological role, acts as a cargo receptor for glycogen. Delivers its cargo to an autophagic pathway called glycophagy, resulting in the transport of glycogen to lysosomes. The polypeptide is Starch-binding domain-containing protein 1 (Homo sapiens (Human)).